A 142-amino-acid chain; its full sequence is Salivary protein 15a (142 aa).

The signal sequence occupies residues 1 to 20; sequence MKYLGLALISAVFLIGACQA. 3 disulfide bridges follow: Cys-27-Cys-44, Cys-40-Cys-108, and Cys-91-Cys-117.

This sequence belongs to the PBP/GOBP family. In terms of tissue distribution, female salivary gland (at protein level).

Its subcellular location is the secreted. Inhibits contact coagulation pathway activation in the host by sequestering anionic polymers, such as polyphosphate and dextran sulfate, and thus blocking interaction of protein components of the pathway with negatively charged surfaces. Inhibits dextran sulfate-mediated autoactivation of host coagulation factor XII (F12). Inhibits dextran sulfate-mediated autoactivation of host factor XI (F11). Inhibits polyphosphate-mediated activation of host F11 by thrombin (F2). May inhibit dextran sulfate-mediated bradykinin generation in host plasma. This chain is Salivary protein 15a, found in Phlebotomus duboscqi (Sandfly).